We begin with the raw amino-acid sequence, 314 residues long: MKKYKSEFIPEFKKNYLSPVYWFTWFVLGMIAGISMFPPSFRDPVLAKIGRWVGRLSRKARRRATINLSLCFPEKSDTEREIIVDNMFATALQSIVMMAELAIRGPEKFQKRVFWKGLEILEEIRHNNRNVIFLVPHGWSVDIPAMLLAAQGEKMAAMFHQQRNPVIDYVWNSVRRKFGGRLHSREDGIKPFIQSVRQGYWGYYLPDQDHGPEYSEFADFFATYKATLPIIGRLMNISQAMIIPLFPVYDEKKHFLTIEVRPPMDACIASADNKMIARQMNKTVEILVGSHPEQYIWVLKLLKTRKSNEADPYP.

The helical transmembrane segment at 17–37 (LSPVYWFTWFVLGMIAGISMF) threads the bilayer. The short motif at 137 to 142 (HGWSVD) is the HXXXXD motif element.

It belongs to the LpxL/LpxM/LpxP family. LpxM subfamily.

Its subcellular location is the cell inner membrane. It carries out the reaction an alpha-Kdo-(2-&gt;4)-alpha-Kdo-(2-&gt;6)-(acyl)-lipid IVA + a fatty acyl-[ACP] = an alpha-Kdo-(2-&gt;4)-alpha-Kdo-(2-&gt;6)-lipid A + holo-[ACP]. Its pathway is glycolipid biosynthesis; KDO(2)-lipid A biosynthesis; KDO(2)-lipid A from CMP-3-deoxy-D-manno-octulosonate and lipid IV(A): step 4/4. It functions in the pathway bacterial outer membrane biogenesis; lipopolysaccharide biosynthesis. Functionally, catalyzes the transfer of an acyl chain from an acyl-[acyl-carrier-protein] (ACP) to a Kdo(2)-(acyl)-lipid IV(A) to form a Kdo(2)-lipid A. The protein is Lipid A biosynthesis acyltransferase 2 of Shigella flexneri.